Reading from the N-terminus, the 87-residue chain is U3-theraphotoxin-Hhn1a 2 (87 aa).

Positions Met1 to Ala24 are cleaved as a signal peptide. Residues Ser25–Arg52 constitute a propeptide that is removed on maturation. 3 cysteine pairs are disulfide-bonded: Cys54-Cys67, Cys61-Cys72, and Cys66-Cys79.

The protein belongs to the neurotoxin 10 (Hwtx-1) family. 51 (Hntx-8) subfamily. Hntx-8 sub-subfamily. As to expression, expressed by the venom gland.

It is found in the secreted. Ion channel inhibitor. This Cyriopagopus hainanus (Chinese bird spider) protein is U3-theraphotoxin-Hhn1a 2.